We begin with the raw amino-acid sequence, 419 residues long: Putative zinc metalloprotease M6_Spy1682 (419 aa).

Position 18 (His18) interacts with Zn(2+). Glu19 is an active-site residue. His22 contacts Zn(2+). Helical transmembrane passes span 169–191 (LITN…ILLV), 301–323 (LAWS…FSLN), 343–365 (LESV…LIPI), and 392–411 (AYIT…AVTW). A PDZ domain is found at 175-274 (GPMNNFILGI…LKTVAVKPQK (100 aa)).

It belongs to the peptidase M50B family. Zn(2+) is required as a cofactor.

It localises to the cell membrane. This Streptococcus pyogenes serotype M6 (strain ATCC BAA-946 / MGAS10394) protein is Putative zinc metalloprotease M6_Spy1682.